Consider the following 204-residue polypeptide: Large ribosomal subunit protein eL15 (204 aa).

This sequence belongs to the eukaryotic ribosomal protein eL15 family. As to quaternary structure, component of the large ribosomal subunit.

Its subcellular location is the cytoplasm. Its function is as follows. Component of the large ribosomal subunit. The ribosome is a large ribonucleoprotein complex responsible for the synthesis of proteins in the cell. This Silurus asotus (Amur catfish) protein is Large ribosomal subunit protein eL15 (rpl15).